The chain runs to 198 residues: MSSLEELMAKAKDLHAEGHSSGQIADELSLSVDTVTWLLTQGKAGIAAPKDVHIDWTNVSSNTTLLGGISSMMLAHFEAANEEEEGVDAVIGISVSGVPLATMIAAEDGLNLAIYHPSKHNPEGKIGSISGNFSKVSQKRCLIVDDCITTGNTLTEIVNYLRRHKATPVGICVIFDKRGVKEIEGVPVYSLFTIKRID.

It belongs to the purine/pyrimidine phosphoribosyltransferase family. GfcR subfamily.

This Methanocorpusculum labreanum (strain ATCC 43576 / DSM 4855 / Z) protein is Transcriptional regulator GfcR.